The chain runs to 101 residues: Small ribosomal subunit protein bS18c (101 aa).

Residues 1–19 (MDKSKQLFRKSKGSFRRRL) are compositionally biased toward basic residues. The segment at 1 to 23 (MDKSKQLFRKSKGSFRRRLPPIG) is disordered.

It belongs to the bacterial ribosomal protein bS18 family. In terms of assembly, part of the 30S ribosomal subunit.

The protein localises to the plastid. It is found in the chloroplast. The sequence is that of Small ribosomal subunit protein bS18c from Acorus gramineus (Dwarf sweet flag).